The following is a 408-amino-acid chain: Imidazolonepropionase (408 aa).

2 residues coordinate Fe(3+): H73 and H75. Residues H73 and H75 each coordinate Zn(2+). Residues R82, Y145, and H178 each contribute to the 4-imidazolone-5-propanoate site. Y145 serves as a coordination point for N-formimidoyl-L-glutamate. H243 is a Fe(3+) binding site. H243 contributes to the Zn(2+) binding site. Q246 lines the 4-imidazolone-5-propanoate pocket. D318 contributes to the Fe(3+) binding site. Position 318 (D318) interacts with Zn(2+). The N-formimidoyl-L-glutamate site is built by N320 and G322. S323 contacts 4-imidazolone-5-propanoate.

This sequence belongs to the metallo-dependent hydrolases superfamily. HutI family. The cofactor is Zn(2+). Requires Fe(3+) as cofactor.

It localises to the cytoplasm. It catalyses the reaction 4-imidazolone-5-propanoate + H2O = N-formimidoyl-L-glutamate. Its pathway is amino-acid degradation; L-histidine degradation into L-glutamate; N-formimidoyl-L-glutamate from L-histidine: step 3/3. Its function is as follows. Catalyzes the hydrolytic cleavage of the carbon-nitrogen bond in imidazolone-5-propanoate to yield N-formimidoyl-L-glutamate. It is the third step in the universal histidine degradation pathway. The polypeptide is Imidazolonepropionase (Shewanella putrefaciens (strain CN-32 / ATCC BAA-453)).